We begin with the raw amino-acid sequence, 379 residues long: Cobalt-precorrin-5B C(1)-methyltransferase (379 aa).

It belongs to the CbiD family.

The catalysed reaction is Co-precorrin-5B + S-adenosyl-L-methionine = Co-precorrin-6A + S-adenosyl-L-homocysteine. Its pathway is cofactor biosynthesis; adenosylcobalamin biosynthesis; cob(II)yrinate a,c-diamide from sirohydrochlorin (anaerobic route): step 6/10. Its function is as follows. Catalyzes the methylation of C-1 in cobalt-precorrin-5B to form cobalt-precorrin-6A. The polypeptide is Cobalt-precorrin-5B C(1)-methyltransferase (Salmonella paratyphi B (strain ATCC BAA-1250 / SPB7)).